The chain runs to 366 residues: Carbamoyl phosphate synthase small chain (366 aa).

The segment at 1–171 (MLERRYLVLE…KTPYVSTGSD (171 aa)) is CPSase. Residues serine 47, glycine 221, and glycine 223 each contribute to the L-glutamine site. Positions 173–360 (SVVLLDFGKK…MTMMKEFKEK (188 aa)) constitute a Glutamine amidotransferase type-1 domain. Cysteine 248 functions as the Nucleophile in the catalytic mechanism. Residues leucine 249, glutamine 252, asparagine 290, glycine 292, and tyrosine 293 each contribute to the L-glutamine site. Residues histidine 333 and glutamate 335 contribute to the active site.

It belongs to the CarA family. Composed of two chains; the small (or glutamine) chain promotes the hydrolysis of glutamine to ammonia, which is used by the large (or ammonia) chain to synthesize carbamoyl phosphate. Tetramer of heterodimers (alpha,beta)4.

It carries out the reaction hydrogencarbonate + L-glutamine + 2 ATP + H2O = carbamoyl phosphate + L-glutamate + 2 ADP + phosphate + 2 H(+). It catalyses the reaction L-glutamine + H2O = L-glutamate + NH4(+). It participates in amino-acid biosynthesis; L-arginine biosynthesis; carbamoyl phosphate from bicarbonate: step 1/1. The protein operates within pyrimidine metabolism; UMP biosynthesis via de novo pathway; (S)-dihydroorotate from bicarbonate: step 1/3. Its function is as follows. Small subunit of the glutamine-dependent carbamoyl phosphate synthetase (CPSase). CPSase catalyzes the formation of carbamoyl phosphate from the ammonia moiety of glutamine, carbonate, and phosphate donated by ATP, constituting the first step of 2 biosynthetic pathways, one leading to arginine and/or urea and the other to pyrimidine nucleotides. The small subunit (glutamine amidotransferase) binds and cleaves glutamine to supply the large subunit with the substrate ammonia. The chain is Carbamoyl phosphate synthase small chain from Staphylococcus haemolyticus (strain JCSC1435).